Reading from the N-terminus, the 296-residue chain is Ethanolamine ammonia-lyase small subunit (296 aa).

Adenosylcob(III)alamin is bound by residues V209 and E230.

The protein belongs to the EutC family. The basic unit is a heterodimer which dimerizes to form tetramers. The heterotetramers trimerize; 6 large subunits form a core ring with 6 small subunits projecting outwards. It depends on adenosylcob(III)alamin as a cofactor.

The protein resides in the bacterial microcompartment. It catalyses the reaction ethanolamine = acetaldehyde + NH4(+). Its pathway is amine and polyamine degradation; ethanolamine degradation. Functionally, catalyzes the deamination of various vicinal amino-alcohols to oxo compounds. Allows this organism to utilize ethanolamine as the sole source of nitrogen and carbon in the presence of external vitamin B12. The polypeptide is Ethanolamine ammonia-lyase small subunit (Lachnoclostridium phytofermentans (strain ATCC 700394 / DSM 18823 / ISDg) (Clostridium phytofermentans)).